Here is a 446-residue protein sequence, read N- to C-terminus: Sorting nexin-30 (446 aa).

The segment covering 1 to 18 (MSGSSTPKSLPTSGQQSL) has biased composition (polar residues). Residues 1-84 (MSGSSTPKSL…SSPASSSSLL (84 aa)) form a disordered region. The segment covering 70-84 (TPADTSSPASSSSLL) has biased composition (low complexity). A PX domain is found at 98 to 219 (RDLFVTVDDP…VFLTAKDLNS (122 aa)). Residues Arg-141, Gln-143, Lys-171, and Arg-185 each coordinate a 1,2-diacyl-sn-glycero-3-phospho-(1D-myo-inositol-3-phosphate). The BAR domain occupies 243-446 (KLRNRPVEFA…PLLQDKQEPK (204 aa)).

The protein belongs to the sorting nexin family.

Its subcellular location is the early endosome membrane. Its function is as follows. Involved in the regulation of endocytosis and in several stages of intracellular trafficking. Together with snx4, involved in autophagosome assembly. In Xenopus tropicalis (Western clawed frog), this protein is Sorting nexin-30 (snx30).